Consider the following 90-residue polypeptide: Probable Fe(2+)-trafficking protein (90 aa).

This sequence belongs to the Fe(2+)-trafficking protein family.

In terms of biological role, could be a mediator in iron transactions between iron acquisition and iron-requiring processes, such as synthesis and/or repair of Fe-S clusters in biosynthetic enzymes. In Nitrosomonas europaea (strain ATCC 19718 / CIP 103999 / KCTC 2705 / NBRC 14298), this protein is Probable Fe(2+)-trafficking protein.